Consider the following 664-residue polypeptide: Transketolase 1 (664 aa).

Residue His-26 participates in substrate binding. Thiamine diphosphate-binding positions include His-66 and 114–116; that span reads GPL. Asp-155 lines the Mg(2+) pocket. 2 residues coordinate thiamine diphosphate: Gly-156 and Asn-185. Residues Asn-185 and Ile-187 each contribute to the Mg(2+) site. The substrate site is built by His-260, Arg-357, and Ser-384. His-260 lines the thiamine diphosphate pocket. Glu-411 functions as the Proton donor in the catalytic mechanism. Thiamine diphosphate is bound at residue Phe-437. The substrate site is built by His-461, Asp-469, and Arg-520.

Belongs to the transketolase family. In terms of assembly, homodimer. Mg(2+) serves as cofactor. Requires Ca(2+) as cofactor. The cofactor is Mn(2+). It depends on Co(2+) as a cofactor. Thiamine diphosphate is required as a cofactor.

The catalysed reaction is D-sedoheptulose 7-phosphate + D-glyceraldehyde 3-phosphate = aldehydo-D-ribose 5-phosphate + D-xylulose 5-phosphate. Functionally, catalyzes the transfer of a two-carbon ketol group from a ketose donor to an aldose acceptor, via a covalent intermediate with the cofactor thiamine pyrophosphate. This is Transketolase 1 (tkt1) from Vibrio vulnificus (strain YJ016).